Here is a 356-residue protein sequence, read N- to C-terminus: MSKIIDIKTSIVTIPLKRTFVTAVRSTNHIDAVVVELSLDNGNKGYGVAPATTAITGDTLQGMQYIISEIFAPVILSSNLSDYKQTLELAFKKVMFNSAAKMALDLAFHDLLAKQKNISVAKLLGAKNNIIETDVSISCGSVAETIQNIQNGVEANFTTIKVKTGADFNRDIQLLKSLDNEFSKNIKFRFDANQGWNISQTKQFIEELNKYSLNVEIIEQPVKYYDISAMREITKFSNIPIVADESVFDAKDAERVIDEQACNMINIKLAKSGGILEAQKIKKLADSVGIPCMVGCMMESPAGILATASFALAEGITVADLDPLDWVAKDLYSDYITFNEPNIIIKDNLKGFGFSF.

161-163 (KVK) contributes to the substrate binding site. Positions 191, 219, and 244 each coordinate Mg(2+). Substrate-binding positions include K268 and 320–322 (DLD).

Belongs to the mandelate racemase/muconate lactonizing enzyme family. Requires Mg(2+) as cofactor.

The enzyme catalyses L-alanyl-L-glutamate = L-alanyl-D-glutamate. Dipeptide epimerase with a preference for substrates containing a Glu residue in the second position. Catalyzes the epimerization of L-Ala-L-Glu, L-Ser-L-Glu, L-Thr-L-Glu, L-Val-L-Glu, L-Gly-L-Glu and L-Thr-L-Glu (in vitro). May play a role in the metabolism of the murein peptide, of which L-Ala-D-Glu is a component. The chain is L-Ala-D/L-Glu epimerase from Francisella tularensis subsp. novicida (strain U112).